A 303-amino-acid polypeptide reads, in one-letter code: Probable cell division protein WhiA (303 aa).

Residues 272–303 constitute a DNA-binding region (H-T-H motif); it reads SIQQVADALEFPITKSGVNHRLRKINKIADDL.

This sequence belongs to the WhiA family.

Its function is as follows. Involved in cell division and chromosome segregation. The sequence is that of Probable cell division protein WhiA from Streptococcus pyogenes serotype M6 (strain ATCC BAA-946 / MGAS10394).